A 149-amino-acid polypeptide reads, in one-letter code: Small ribosomal subunit protein uS15 (149 aa).

The span at 1-11 (MARMHSRDRGK) shows a compositional bias: basic and acidic residues. Residues 1-25 (MARMHSRDRGKSGSTRPPRVAPPSW) form a disordered region.

Belongs to the universal ribosomal protein uS15 family. In terms of assembly, part of the 30S ribosomal subunit.

The protein is Small ribosomal subunit protein uS15 of Methanopyrus kandleri (strain AV19 / DSM 6324 / JCM 9639 / NBRC 100938).